The following is a 102-amino-acid chain: Small ribosomal subunit protein uS10 (102 aa).

Belongs to the universal ribosomal protein uS10 family. In terms of assembly, part of the 30S ribosomal subunit.

In terms of biological role, involved in the binding of tRNA to the ribosomes. The chain is Small ribosomal subunit protein uS10 from Lactiplantibacillus plantarum (strain ATCC BAA-793 / NCIMB 8826 / WCFS1) (Lactobacillus plantarum).